A 645-amino-acid polypeptide reads, in one-letter code: MAGDTGANPLFLGWVKEWWDTAREHNTKGAPTYKKAYNSLKACPLTFQHPSELQVLNGFGPTISQRLTDRLKQYCEENGLPMPKHPKRKRTLELESALAAAGAVQDEQPPPPKRARTARPYVPKLNSGAYALLMALSELGPKEFMDKTTLIAKAQPYSEHSFTVPTMANKSYTAWDSMKTLEQKELVWLRGLPSKRYSLTDEGWEVVKRMKEAQNLVDGVAGSANTSRNAIASGSGTSNPNRSENVNPNRQDSGVKRESRYTPLDLKPFVTTTATPERPLQPKPHTANSEYSIIIDSDDEDPKYDEEDRKPIIRDTTNRDYIDLVADGDSVPDESNLPHFTPIRLAPGSFTVELVLDTREVQAKNNRDHIQEELSKLGVRPVMRSLELGDVLWIAKCKQPGWLNRLGAEGDEVVLDYIVERKRLDDLIGSIKDGRFREQKYRLKRSGMKNVVYIIENYNIDMDIRRQYQDAMDTAMASIQVVNGYFLKKTDTIAESIRYLAAVTYMLKEIYESKPLFVIPTQVLTAKNYLPLVKHLREKEPSRGYYISYPAFASLVSKSEMMTLKDVFIKMLMCIRRLSGEKAIEIQKVWKTPYQLVKAFEACGSDENGKKKQKVLVMSMLSHLVDRRNVDKGLSERIADVWGFL.

Disordered regions lie at residues 98 to 119 (LAAA…RTAR) and 219 to 310 (GVAG…EDRK). A compositionally biased stretch (polar residues) spans 223–252 (SANTSRNAIASGSGTSNPNRSENVNPNRQD). Residues 296–305 (DSDDEDPKYD) show a composition bias toward acidic residues. One can recognise an ERCC4 domain in the interval 353–459 (ELVLDTREVQ…NVVYIIENYN (107 aa)).

Belongs to the XPF family. As to quaternary structure, interacts with eme-1. It depends on Mg(2+) as a cofactor.

It localises to the nucleus. Functionally, interacts with eme-1 to form a DNA structure-specific endonuclease with substrate preference for branched DNA structures with a 5'-end at the branch nick. Typical substrates include 3'-flap structures, D-loops, replication forks and nicked Holliday junctions. May be required in mitosis for the processing of stalled or collapsed replication fork intermediates. May be required in meiosis for the repair of meiosis-specific double strand breaks subsequent to single-end invasion (SEI). The polypeptide is Crossover junction endonuclease mus-81 (mus-81) (Neurospora crassa (strain ATCC 24698 / 74-OR23-1A / CBS 708.71 / DSM 1257 / FGSC 987)).